Consider the following 276-residue polypeptide: MSWLQVVVLSVLQGLTEFLPVSSSGHLAIASRVFFEDDAGASFTAVCQLGTEAAVLVYFARDIARILKAWFAGLFGSGERSPDYWLGWWVIIGTIPISVIGLLFKDEIRTGARNLWLVATAMIVFSFVIAAAEYAGRQTRRVEQLTWRDSVIVGFAQCLALVPGVSRSGATISAGLFLGMDRELAARFGFLLAIPAVFASGLFSLPDAFAPVGEGMSATGPQLLVSTVIAFVVGYAAVAWFLRFLVRHSMYWFVGYRIILGSVVLILLSTGVVAAI.

The next 8 helical transmembrane spans lie at 1–21 (MSWL…FLPV), 39–59 (AGAS…LVYF), 84–104 (YWLG…GLLF), 115–135 (LWLV…AEYA), 159–179 (LALV…LFLG), 190–210 (FLLA…DAFA), 222–242 (QLLV…AWFL), and 253–273 (FVGY…TGVV).

This sequence belongs to the UppP family.

The protein resides in the cell membrane. It carries out the reaction di-trans,octa-cis-undecaprenyl diphosphate + H2O = di-trans,octa-cis-undecaprenyl phosphate + phosphate + H(+). Its function is as follows. Catalyzes the dephosphorylation of undecaprenyl diphosphate (UPP). Confers resistance to bacitracin. This is Undecaprenyl-diphosphatase from Mycolicibacterium gilvum (strain PYR-GCK) (Mycobacterium gilvum (strain PYR-GCK)).